The following is a 381-amino-acid chain: Fe-S cluster assembly protein DRE2 (381 aa).

Residues 8–165 (AQGSGRFLLL…KPDFGAQQAV (158 aa)) are N-terminal SAM-like domain. The disordered stretch occupies residues 100–134 (RNRDNQIWGSGSDSAAGLGSSDGDGGGGEKMSSSE). Residues 108 to 118 (GSGSDSAAGLG) show a composition bias toward low complexity. Residues 119-128 (SSDGDGGGGE) are compositionally biased toward gly residues. The interval 166–273 (PLKLGRKKNL…EEELLGEYDM (108 aa)) is linker. [2Fe-2S] cluster is bound by residues Cys283, Cys294, Cys297, and Cys299. The segment at 283 to 299 (CRPKAGKRRRACKDCTC) is fe-S binding site A. The [4Fe-4S] cluster site is built by Cys344, Cys347, Cys355, and Cys358. Short sequence motifs (cx2C motif) lie at residues 344–347 (CGNC) and 355–358 (CDGC). A fe-S binding site B region spans residues 344 to 358 (CGNCALGDAFRCDGC).

Belongs to the anamorsin family. In terms of assembly, monomer. Interacts with TAH18. Interacts with MIA40. It depends on [2Fe-2S] cluster as a cofactor. The cofactor is [4Fe-4S] cluster.

It localises to the cytoplasm. The protein localises to the mitochondrion intermembrane space. Its function is as follows. Component of the cytosolic iron-sulfur (Fe-S) protein assembly (CIA) machinery required for the maturation of extramitochondrial Fe-S proteins. Part of an electron transfer chain functioning in an early step of cytosolic Fe-S biogenesis, facilitating the de novo assembly of a [4Fe-4S] cluster on the scaffold complex CFD1-NBP35. Electrons are transferred to DRE2 from NADPH via the FAD- and FMN-containing protein TAH18. TAH18-DRE2 are also required for the assembly of the diferric tyrosyl radical cofactor of ribonucleotide reductase (RNR), probably by providing electrons for reduction during radical cofactor maturation in the catalytic small subunit RNR2. This is Fe-S cluster assembly protein DRE2 from Paracoccidioides brasiliensis (strain Pb18).